The following is a 273-amino-acid chain: Thiazole synthase (273 aa).

Catalysis depends on Lys-110, which acts as the Schiff-base intermediate with DXP. 1-deoxy-D-xylulose 5-phosphate-binding positions include Gly-171, 197–198, and 219–220; these read AG and NT. The tract at residues 251-273 is disordered; that stretch reads MAAQDSAQPSTPVLGTPFWHHAP.

It belongs to the ThiG family. As to quaternary structure, homotetramer. Forms heterodimers with either ThiH or ThiS.

It localises to the cytoplasm. It carries out the reaction [ThiS sulfur-carrier protein]-C-terminal-Gly-aminoethanethioate + 2-iminoacetate + 1-deoxy-D-xylulose 5-phosphate = [ThiS sulfur-carrier protein]-C-terminal Gly-Gly + 2-[(2R,5Z)-2-carboxy-4-methylthiazol-5(2H)-ylidene]ethyl phosphate + 2 H2O + H(+). Its pathway is cofactor biosynthesis; thiamine diphosphate biosynthesis. In terms of biological role, catalyzes the rearrangement of 1-deoxy-D-xylulose 5-phosphate (DXP) to produce the thiazole phosphate moiety of thiamine. Sulfur is provided by the thiocarboxylate moiety of the carrier protein ThiS. In vitro, sulfur can be provided by H(2)S. The chain is Thiazole synthase from Variovorax paradoxus (strain S110).